We begin with the raw amino-acid sequence, 478 residues long: Glycogen synthase (478 aa).

Residue Lys-15 participates in ADP-alpha-D-glucose binding.

The protein belongs to the glycosyltransferase 1 family. Bacterial/plant glycogen synthase subfamily.

It catalyses the reaction [(1-&gt;4)-alpha-D-glucosyl](n) + ADP-alpha-D-glucose = [(1-&gt;4)-alpha-D-glucosyl](n+1) + ADP + H(+). It functions in the pathway glycan biosynthesis; glycogen biosynthesis. In terms of biological role, synthesizes alpha-1,4-glucan chains using ADP-glucose. The chain is Glycogen synthase from Enterobacter sp. (strain 638).